Consider the following 691-residue polypeptide: Pleckstrin homology domain-containing family G member 7 (691 aa).

2 disordered regions span residues 1-48 and 109-140; these read MEKT…ISTS and TSEPERALNAADSLEPQTRPTDKYLPPELQPV. Residues 313 to 488 enclose the DH domain; the sequence is MIFMNTLRYL…EGKVKWLDNF (176 aa). N-linked (GlcNAc...) asparagine glycosylation is present at asparagine 395. The region spanning 535 to 668 is the PH domain; the sequence is HLLYEGKLTL…WMAQITTAIS (134 aa).

The chain is Pleckstrin homology domain-containing family G member 7 from Homo sapiens (Human).